Here is a 255-residue protein sequence, read N- to C-terminus: tRNA (guanine-N(1)-)-methyltransferase (255 aa).

S-adenosyl-L-methionine contacts are provided by residues G113 and I133–L138.

This sequence belongs to the RNA methyltransferase TrmD family. In terms of assembly, homodimer.

The protein resides in the cytoplasm. The catalysed reaction is guanosine(37) in tRNA + S-adenosyl-L-methionine = N(1)-methylguanosine(37) in tRNA + S-adenosyl-L-homocysteine + H(+). In terms of biological role, specifically methylates guanosine-37 in various tRNAs. This is tRNA (guanine-N(1)-)-methyltransferase from Salmonella agona (strain SL483).